Consider the following 806-residue polypeptide: Mitochondrial intermediate peptidase (806 aa).

The N-terminal 29 residues, 1 to 29 (MLSRHLTVLRSACRVSHDLRVPSTQAVRK), are a transit peptide targeting the mitochondrion. Histidine 581 serves as a coordination point for Zn(2+). Glutamate 582 is an active-site residue. Positions 585 and 588 each coordinate Zn(2+).

It belongs to the peptidase M3 family. Zn(2+) is required as a cofactor.

It is found in the mitochondrion matrix. It catalyses the reaction Release of an N-terminal octapeptide as second stage of processing of some proteins imported into the mitochondrion.. Cleaves proteins, imported into the mitochondrion, to their mature size. While most mitochondrial precursor proteins are processed to the mature form in one step by mitochondrial processing peptidase (MPP), the sequential cleavage by MIP of an octapeptide after initial processing by MPP is a required step for a subgroup of nuclear-encoded precursor proteins destined for the matrix or the inner membrane. This Malassezia globosa (strain ATCC MYA-4612 / CBS 7966) (Dandruff-associated fungus) protein is Mitochondrial intermediate peptidase (OCT1).